A 559-amino-acid chain; its full sequence is CTP synthase (559 aa).

Residues 1 to 283 (MSTSRTTTNN…DTFLIRRLDL (283 aa)) are amidoligase domain. Ser25 lines the CTP pocket. Ser25 serves as a coordination point for UTP. ATP-binding positions include 26 to 31 (SLGKGL) and Asp83. Mg(2+)-binding residues include Asp83 and Glu157. Residues 164–166 (DIE), 204–209 (KTKPTQ), and Lys240 contribute to the CTP site. UTP contacts are provided by residues 204–209 (KTKPTQ) and Lys240. One can recognise a Glutamine amidotransferase type-1 domain in the interval 308–557 (TVGIVGKYVD…VAAALAAAVT (250 aa)). Gly371 is an L-glutamine binding site. Cys398 serves as the catalytic Nucleophile; for glutamine hydrolysis. Residues 399–402 (LGLQ), Glu421, and Arg482 each bind L-glutamine. Catalysis depends on residues His530 and Glu532.

Belongs to the CTP synthase family. As to quaternary structure, homotetramer.

The enzyme catalyses UTP + L-glutamine + ATP + H2O = CTP + L-glutamate + ADP + phosphate + 2 H(+). It carries out the reaction L-glutamine + H2O = L-glutamate + NH4(+). It catalyses the reaction UTP + NH4(+) + ATP = CTP + ADP + phosphate + 2 H(+). Its pathway is pyrimidine metabolism; CTP biosynthesis via de novo pathway; CTP from UDP: step 2/2. Its activity is regulated as follows. Allosterically activated by GTP, when glutamine is the substrate; GTP has no effect on the reaction when ammonia is the substrate. The allosteric effector GTP functions by stabilizing the protein conformation that binds the tetrahedral intermediate(s) formed during glutamine hydrolysis. Inhibited by the product CTP, via allosteric rather than competitive inhibition. Catalyzes the ATP-dependent amination of UTP to CTP with either L-glutamine or ammonia as the source of nitrogen. Regulates intracellular CTP levels through interactions with the four ribonucleotide triphosphates. The polypeptide is CTP synthase (Corynebacterium efficiens (strain DSM 44549 / YS-314 / AJ 12310 / JCM 11189 / NBRC 100395)).